The primary structure comprises 350 residues: Cephaeline 6'-O-methyltransferase IpeOMT1 (350 aa).

Residues glycine 193, aspartate 216, aspartate 236, methionine 237, and lysine 250 each contribute to the S-adenosyl-L-methionine site. Histidine 254 (proton acceptor) is an active-site residue.

The protein belongs to the class I-like SAM-binding methyltransferase superfamily. Cation-independent O-methyltransferase family. Expressed in roots.

The protein localises to the cytoplasm. It is found in the cytosol. It carries out the reaction cephaeline + S-adenosyl-L-methionine = emetine + S-adenosyl-L-homocysteine + H(+). The catalysed reaction is deacetylisoipecoside + S-adenosyl-L-methionine = 6-O-methyldeacetylisoipecoside + S-adenosyl-L-homocysteine + H(+). The enzyme catalyses 7-O-methyldeacetylisoipecoside + S-adenosyl-L-methionine = 6,7-O,O-dimethyldeacetylisoipecoside + S-adenosyl-L-homocysteine + H(+). It catalyses the reaction norcoclaurine + S-adenosyl-L-methionine = coclaurine + S-adenosyl-L-homocysteine + H(+). It carries out the reaction (S)-norprotosinomenine + S-adenosyl-L-methionine = (S)-6-O-methylnorprotosinomenine + S-adenosyl-L-homocysteine + H(+). The catalysed reaction is (R)-norprotosinomenine + S-adenosyl-L-methionine = (R)-6-O-methylnorprotosinomenine + S-adenosyl-L-homocysteine + H(+). Its pathway is alkaloid biosynthesis. In terms of biological role, O-methyltransferase involved in the biosynthesis of ipecac and benzylisoquinoline monoterpenoid-isoquinoline alkaloids natural products, starting by the condensation of dopamine and secologanin, and including emetine and cephaeline, drugs used both as anti-protozoal (e.g. treatment of ameobiasis) and as emetic agents. Mediates cephaeline 6'-O-methylation to produce emetine. Catalyzes the 6-O-methylation of N-deacetylisoipecoside, 7-O-methyl-N-deacetylisoipecoside, isococlaurine, norcoclaurine, (S)-norprotosinomenine and (R)-norprotosinomenine, and, with a lower efficiency, of 4'-O-methyllaudanosoline, isoorientaline and protosinomenine. Supports also the 4'-O-methylation of nororientaline. This Carapichea ipecacuanha (Ipecac) protein is Cephaeline 6'-O-methyltransferase IpeOMT1.